Reading from the N-terminus, the 167-residue chain is Phospholipase A and acyltransferase 1 (167 aa).

Residues 1 to 138 lie on the Cytoplasmic side of the membrane; it reads MAVNDCFSLT…GEGVSEQANR (138 aa). One can recognise an LRAT domain in the interval 20 to 135; the sequence is LIEVFRPCYQ…LRYGEGVSEQ (116 aa). H30 is an active-site residue. Catalysis depends on C119, which acts as the Acyl-thioester intermediate. A helical transmembrane segment spans residues 139–159; sequence AIGTIGLVAAGIDIFTFLGLF. Over 160–167 the chain is Lumenal; it reads PKRQGAKS.

It belongs to the H-rev107 family.

The protein localises to the membrane. The protein resides in the cytoplasm. Its subcellular location is the nucleus. The catalysed reaction is a 1,2-diacyl-sn-glycero-3-phosphocholine + H2O = a 1-acyl-sn-glycero-3-phosphocholine + a fatty acid + H(+). The enzyme catalyses a 1,2-diacyl-sn-glycero-3-phosphocholine + H2O = a 2-acyl-sn-glycero-3-phosphocholine + a fatty acid + H(+). It catalyses the reaction 1,2-dihexadecanoyl-sn-glycero-3-phosphocholine + H2O = 2-hexadecanoyl-sn-glycero-3-phosphocholine + hexadecanoate + H(+). It carries out the reaction 1,2-dihexadecanoyl-sn-glycero-3-phosphocholine + H2O = 1-hexadecanoyl-sn-glycero-3-phosphocholine + hexadecanoate + H(+). The catalysed reaction is 1-hexadecanoyl-2-(5Z,8Z,11Z,14Z-eicosatetraenoyl)-sn-glycero-3-phosphoethanolamine + H2O = 2-(5Z,8Z,11Z,14Z)-eicosatetraenoyl-sn-glycero-3-phosphoethanolamine + hexadecanoate + H(+). The enzyme catalyses 1-hexadecanoyl-2-(5Z,8Z,11Z,14Z-eicosatetraenoyl)-sn-glycero-3-phosphoethanolamine + H2O = 1-hexadecanoyl-sn-glycero-3-phosphoethanolamine + (5Z,8Z,11Z,14Z)-eicosatetraenoate + H(+). It catalyses the reaction 1,2-di-(9Z-octadecenoyl)-sn-glycero-3-phosphoethanolamine + 1,2-dihexadecanoyl-sn-glycero-3-phosphocholine = hexadecanoyl-sn-glycero-3-phosphocholine + N-hexadecanoyl-1,2-di-(9Z-octadecenoyl)-sn-glycero-3-phosphoethanolamine + H(+). It carries out the reaction 1,2-dihexadecanoyl-sn-glycero-3-phosphocholine + a 2-acyl-sn-glycero-3-phosphocholine = a 1-hexadecanoyl-2-acyl-sn-glycero-3-phosphocholine + 2-hexadecanoyl-sn-glycero-3-phosphocholine. Functionally, exhibits both phospholipase A1/2 and acyltransferase activities. Shows phospholipase A1 (PLA1) and A2 (PLA2) activity, catalyzing the calcium-independent release of fatty acids from the sn-1 or sn-2 position of glycerophospholipids. Shows O-acyltransferase activity, catalyzing the transfer of a fatty acyl group from glycerophospholipid to the hydroxyl group of lysophospholipid. The polypeptide is Phospholipase A and acyltransferase 1 (Rattus norvegicus (Rat)).